The chain runs to 79 residues: Sigma-O factor regulatory protein RsoA (79 aa).

Functionally, together with RNA polymerase sigma factor SigO, positively regulates the expression of at least three operons, including oxdC-yvrL, sigO-rsoA and yvrJ. Required for the acid stress-dependent induction of the oxalate decarboxylase oxdC. The chain is Sigma-O factor regulatory protein RsoA (rsoA) from Bacillus subtilis (strain 168).